Here is a 212-residue protein sequence, read N- to C-terminus: Pyridoxine/pyridoxamine 5'-phosphate oxidase (212 aa).

Residues R8 to Y11 and K66 contribute to the substrate site. Residues R61 to K66, F76 to T77, R82, K83, and Q105 each bind FMN. Residues Y123, R127, and S131 each coordinate substrate. FMN-binding positions include Q140–S141 and W185. R191–H193 is a binding site for substrate. Residue R195 coordinates FMN.

It belongs to the pyridoxamine 5'-phosphate oxidase family. As to quaternary structure, homodimer. FMN is required as a cofactor.

The catalysed reaction is pyridoxamine 5'-phosphate + O2 + H2O = pyridoxal 5'-phosphate + H2O2 + NH4(+). It catalyses the reaction pyridoxine 5'-phosphate + O2 = pyridoxal 5'-phosphate + H2O2. The protein operates within cofactor metabolism; pyridoxal 5'-phosphate salvage; pyridoxal 5'-phosphate from pyridoxamine 5'-phosphate: step 1/1. Its pathway is cofactor metabolism; pyridoxal 5'-phosphate salvage; pyridoxal 5'-phosphate from pyridoxine 5'-phosphate: step 1/1. Catalyzes the oxidation of either pyridoxine 5'-phosphate (PNP) or pyridoxamine 5'-phosphate (PMP) into pyridoxal 5'-phosphate (PLP). The polypeptide is Pyridoxine/pyridoxamine 5'-phosphate oxidase (Shewanella baltica (strain OS155 / ATCC BAA-1091)).